Consider the following 192-residue polypeptide: Large ribosomal subunit protein uL6 (192 aa).

This sequence belongs to the universal ribosomal protein uL6 family. In terms of assembly, component of the large ribosomal subunit.

It is found in the cytoplasm. In terms of biological role, component of the large ribosomal subunit. The ribosome is a large ribonucleoprotein complex responsible for the synthesis of proteins in the cell. This is Large ribosomal subunit protein uL6 (rpl9) from Ictalurus punctatus (Channel catfish).